The primary structure comprises 420 residues: MLPGLRRLLQAPASACLLLMLLALPLAAPSCPMLCTCYSSPPTVSCQANNFSSVPLSLPPSTQRLFLQNNLIRTLRPGTFGSNLLTLWLFSNNLSTIYPGTFRHLQALEELDLGDNRHLRSLEPDTFQGLERLQSLHLYRCQLSSLPGNIFRGLVSLQYLYLQENSLLHLQDDLFADLANLSHLFLHGNRLRLLTEHVFRGLGSLDRLLLHGNRLQGVHRAAFRGLSRLTILYLFNNSLASLPGEALADLPSLEFLRLNANPWACDCRARPLWAWFQRARVSSSDVTCATPPERQGRDLRALREADFQACPPAAPTRPGSRARGNSSSNHLYGVAEAGAPPADPSTLYRDLPAEDSRGRQGGDAPTEDDYWGGYGGEDQRGEQMCPGAACQAPPDSRGPALSAGLPSPLLCLLLLVPHHL.

Positions 1 to 46 (MLPGLRRLLQAPASACLLLMLLALPLAAPSCPMLCTCYSSPPTVSC) are cleaved as a signal peptide. 2 cysteine pairs are disulfide-bonded: C31/C37 and C35/C46. Residues 47-60 (QANNFSSVPLSLPP) enclose the LRRNT domain. A glycan (N-linked (GlcNAc...) asparagine) is linked at N50. LRR repeat units lie at residues 61–82 (STQRLFLQNNLIRTLRPGTFGS), 83–104 (NLLTLWLFSNNLSTIYPGTFRH), 107–129 (ALEELDLGDNRHLRSLEPDTFQG), 132–153 (RLQSLHLYRCQLSSLPGNIFRG), 156–177 (SLQYLYLQENSLLHLQDDLFAD), 180–201 (NLSHLFLHGNRLRLLTEHVFRG), 204–225 (SLDRLLLHGNRLQGVHRAAFRG), and 228–249 (RLTILYLFNNSLASLPGEALAD). N93 carries N-linked (GlcNAc...) asparagine glycosylation. N236 carries an N-linked (GlcNAc...) asparagine glycan. One can recognise an LRRCT domain in the interval 261–312 (NPWACDCRARPLWAWFQRARVSSSDVTCATPPERQGRDLRALREADFQACPP). 2 disulfide bridges follow: C265–C288 and C267–C310. The segment at 308–399 (QACPPAAPTR…CQAPPDSRGP (92 aa)) is disordered. Residues 315-327 (PTRPGSRARGNSS) form an important for interaction with MAG region. Positions 351 to 360 (LPAEDSRGRQ) are enriched in basic and acidic residues. Residue C390 is the site of GPI-anchor amidated cysteine attachment. A propeptide spans 391-420 (QAPPDSRGPALSAGLPSPLLCLLLLVPHHL) (removed in mature form).

Belongs to the Nogo receptor family. As to quaternary structure, interaction with MAG is controversial, and may be indirect. Does not interact with MAG, OMG and RTN4. Interacts with MAG. In terms of processing, undergoes zinc metalloproteinase-mediated ectodomain shedding in neuroblastoma cells; is released both as a full-length ectodomain and an N-terminal fragment containing the leucine-rich repeat (LRR) region of the protein. Post-translationally, N-glycosylated. In terms of tissue distribution, highly expressed in brain and liver. Expressed at lower levels in kidney, mammary gland, placenta, skeletal muscle, spleen and thyroid.

It is found in the cell membrane. It localises to the membrane raft. Its subcellular location is the cell projection. The protein localises to the dendrite. The protein resides in the perikaryon. It is found in the axon. Its function is as follows. Cell surface receptor that plays a functionally redundant role in the inhibition of neurite outgrowth mediated by MAG. Plays a functionally redundant role in postnatal brain development. Contributes to normal axon migration across the brain midline and normal formation of the corpus callosum. Does not seem to play a significant role in regulating axon regeneration in the adult central nervous system. Protects motoneurons against apoptosis; protection against apoptosis is probably mediated by MAG. Like other family members, plays a role in restricting the number dendritic spines and the number of synapses that are formed during brain development. Signaling mediates activation of Rho and downstream reorganization of the actin cytoskeleton. The chain is Reticulon-4 receptor-like 2 from Homo sapiens (Human).